The chain runs to 359 residues: MTFDSQAYAAQLEDKVTRLRDLLAPFDAPEPTVFDSPLQNFRLRAEFRLWREGGERHYAMFSQDDKRTPILIEEFPIASLRINQLMPQLKAAWQASAALSHKLFQVEFLTTLAGDAMITLCYHRPLDEHWHAAATKLATDLGVSIIGRSKGKREVLGLDYVVEKLDVGGRTFSYRQPEGAFTQPNGTVNQKMLNWAYEALGDRSDDLLELYCGNGNFTLPLATRVRKVLATEISKTSVNAALSNLAENAVDNVTLVRLSAEELTEALNEVRPFRRLHGIDLKSYEFGSVFVDPPRAGMDPDTCELTRRFDNILYISCNPETLAANIAQLHDTHRITRCALFDQFPWTHHMESGVLLTRR.

Residues Q183, Y211, N216, E232, and D292 each coordinate S-adenosyl-L-methionine. C317 functions as the Nucleophile in the catalytic mechanism. E351 functions as the Proton acceptor in the catalytic mechanism.

The protein belongs to the class I-like SAM-binding methyltransferase superfamily. RNA M5U methyltransferase family. TrmA subfamily.

The enzyme catalyses uridine(54) in tRNA + S-adenosyl-L-methionine = 5-methyluridine(54) in tRNA + S-adenosyl-L-homocysteine + H(+). It catalyses the reaction uridine(341) in tmRNA + S-adenosyl-L-methionine = 5-methyluridine(341) in tmRNA + S-adenosyl-L-homocysteine + H(+). Dual-specificity methyltransferase that catalyzes the formation of 5-methyluridine at position 54 (m5U54) in all tRNAs, and that of position 341 (m5U341) in tmRNA (transfer-mRNA). This is tRNA/tmRNA (uracil-C(5))-methyltransferase from Pseudomonas fluorescens (strain Pf0-1).